Reading from the N-terminus, the 968-residue chain is Glycine dehydrogenase (decarboxylating) (968 aa).

Lysine 712 is subject to N6-(pyridoxal phosphate)lysine.

It belongs to the GcvP family. As to quaternary structure, the glycine cleavage system is composed of four proteins: P, T, L and H. Requires pyridoxal 5'-phosphate as cofactor.

The enzyme catalyses N(6)-[(R)-lipoyl]-L-lysyl-[glycine-cleavage complex H protein] + glycine + H(+) = N(6)-[(R)-S(8)-aminomethyldihydrolipoyl]-L-lysyl-[glycine-cleavage complex H protein] + CO2. Its function is as follows. The glycine cleavage system catalyzes the degradation of glycine. The P protein binds the alpha-amino group of glycine through its pyridoxal phosphate cofactor; CO(2) is released and the remaining methylamine moiety is then transferred to the lipoamide cofactor of the H protein. The polypeptide is Glycine dehydrogenase (decarboxylating) (Prochlorococcus marinus (strain NATL2A)).